The following is a 222-amino-acid chain: Octanoyltransferase (222 aa).

In terms of domain architecture, BPL/LPL catalytic spans 32–207 (RDRPDVLMLL…AFARVFGVQC (176 aa)). Substrate-binding positions include 72–79 (RGGEVTYH), 139–141 (ALG), and 152–154 (GFA). Catalysis depends on C170, which acts as the Acyl-thioester intermediate.

Belongs to the LipB family.

Its subcellular location is the cytoplasm. The catalysed reaction is octanoyl-[ACP] + L-lysyl-[protein] = N(6)-octanoyl-L-lysyl-[protein] + holo-[ACP] + H(+). It functions in the pathway protein modification; protein lipoylation via endogenous pathway; protein N(6)-(lipoyl)lysine from octanoyl-[acyl-carrier-protein]: step 1/2. In terms of biological role, catalyzes the transfer of endogenously produced octanoic acid from octanoyl-acyl-carrier-protein onto the lipoyl domains of lipoate-dependent enzymes. Lipoyl-ACP can also act as a substrate although octanoyl-ACP is likely to be the physiological substrate. The sequence is that of Octanoyltransferase from Gloeobacter violaceus (strain ATCC 29082 / PCC 7421).